Here is a 462-residue protein sequence, read N- to C-terminus: Elongation factor 1-alpha 1 (462 aa).

The residue at position 2 (Gly-2) is a N,N,N-trimethylglycine. Residues Lys-5 to Thr-242 form the tr-type G domain. Residues Gly-14 to Ser-21 form a G1 region. Gly-14–Ser-21 contributes to the GTP binding site. Lys-36 is subject to N6,N6,N6-trimethyllysine; alternate. At Lys-36 the chain carries N6,N6-dimethyllysine; alternate. Lys-36 carries the post-translational modification N6-methyllysine; alternate. An N6,N6-dimethyllysine modification is found at Lys-55. The segment at Gly-70–Asp-74 is G2. Lys-79 is subject to N6,N6,N6-trimethyllysine; by EEF1AKMT1. Positions Asp-91–Gly-94 are G3. Residue Asn-153–Asp-156 participates in GTP binding. Residues Asn-153–Asp-156 are G4. Lys-165 is modified (N6,N6,N6-trimethyllysine; alternate; by EEF1AKMT3). The residue at position 165 (Lys-165) is an N6,N6-dimethyllysine; alternate; by EEF1AKMT3. At Lys-165 the chain carries N6-acetyllysine; alternate. Lys-165 is subject to N6-methyllysine; alternate; by EEF1AKMT3. Residue Lys-172 is modified to N6-acetyllysine. Ser-194–Trp-196 contributes to the GTP binding site. Positions Ser-194 to Trp-196 are G5. N6-acetyllysine is present on Lys-273. The residue at position 300 (Ser-300) is a Phosphoserine; by TGFBR1. A 5-glutamyl glycerylphosphorylethanolamine modification is found at Glu-301. N6,N6,N6-trimethyllysine; by EEF1AKMT2 is present on Lys-318. Glu-374 carries the 5-glutamyl glycerylphosphorylethanolamine modification. Lys-385 is covalently cross-linked (Glycyl lysine isopeptide (Lys-Gly) (interchain with G-Cter in ubiquitin)). Lys-392 carries the N6-acetyllysine; alternate modification. N6-succinyllysine; alternate is present on Lys-392. Thr-432 is modified (phosphothreonine; by PASK). At Lys-439 the chain carries N6-acetyllysine.

This sequence belongs to the TRAFAC class translation factor GTPase superfamily. Classic translation factor GTPase family. EF-Tu/EF-1A subfamily. Found in a nuclear export complex with XPO5, EEF1A1, Ran and aminoacylated tRNA. Interacts with PARP1 and TXK. Interacts with KARS1. May interact with ERGIC2. Interacts with IFIT1 (via TPR repeats 4-7). Interacts with DLC1, facilitating distribution to the membrane periphery and ruffles upon growth factor stimulation. Interacts with ZPR1; the interaction occurs in a epidermal growth factor (EGF)-dependent manner. Interacts with PPP1R16B. Interacts with SPHK1 and SPHK2; both interactions increase SPHK1 and SPHK2 kinase activity. Interacts with guanyl-nucleotide exchange factor EEF1B2. Interacts (via middle-region) with HTATIP2 (via N-terminus); the interaction is direct and competes with EEF1A1 binding to guanyl-nucleotide exchange factor EEF1B2, thereby inhibiting GDP for GTP exchange and reactivation of EEF1A1. Interacts with tRNA. ISGylated. Post-translationally, phosphorylated by TXK. Phosphorylation by PASK increases translation efficiency. Phosphorylated by ROCK2. Phosphorylation by TGFBR1 inhibits translation elongation. In terms of processing, trimethylated at Lys-79 by EEF1AKMT1. Methylated at Lys-165 by EEF1AKMT3, methylation by EEF1AKMT3 is dynamic as well as inducible by stress conditions, such as ER-stress, and plays a regulatory role on mRNA translation. Trimethylated at Lys-318 by EEF1AKMT2. Mono-, di-, and trimethylated at Lys-36 by EEF1AKMT4; trimethylated form is predominant. Methylation by EEF1AKMT4 contributes to the fine-tuning of translation rates for a subset of tRNAs. Trimethylated at Gly-2 by METTL13. Mono- and dimethylated at Lys-55 by METTL13; dimethylated form is predominant. Ubiquitinated at Lys-385 by RNF14 in response to ribosome collisions (ribosome stalling), leading to its degradation by the proteasome and rescue of stalled ribosomes.

The protein resides in the cytoplasm. Its subcellular location is the nucleus. It localises to the nucleolus. The protein localises to the cell membrane. The catalysed reaction is GTP + H2O = GDP + phosphate + H(+). Translation elongation factor that catalyzes the GTP-dependent binding of aminoacyl-tRNA (aa-tRNA) to the A-site of ribosomes during the elongation phase of protein synthesis. Base pairing between the mRNA codon and the aa-tRNA anticodon promotes GTP hydrolysis, releasing the aa-tRNA from EEF1A1 and allowing its accommodation into the ribosome. The growing protein chain is subsequently transferred from the P-site peptidyl tRNA to the A-site aa-tRNA, extending it by one amino acid through ribosome-catalyzed peptide bond formation. Also plays a role in the positive regulation of IFNG transcription in T-helper 1 cells as part of an IFNG promoter-binding complex with TXK and PARP1. Also plays a role in cytoskeleton organization by promoting actin bundling. This Cricetulus griseus (Chinese hamster) protein is Elongation factor 1-alpha 1 (EEF1A1).